The following is a 433-amino-acid chain: Histidinol dehydrogenase (433 aa).

Positions 129, 191, and 214 each coordinate NAD(+). Substrate contacts are provided by serine 237, glutamine 259, and histidine 262. The Zn(2+) site is built by glutamine 259 and histidine 262. Catalysis depends on proton acceptor residues glutamate 326 and histidine 327. Substrate-binding residues include histidine 327, aspartate 360, glutamate 414, and histidine 419. Aspartate 360 contacts Zn(2+). Residue histidine 419 participates in Zn(2+) binding.

It belongs to the histidinol dehydrogenase family. Zn(2+) serves as cofactor.

It carries out the reaction L-histidinol + 2 NAD(+) + H2O = L-histidine + 2 NADH + 3 H(+). It functions in the pathway amino-acid biosynthesis; L-histidine biosynthesis; L-histidine from 5-phospho-alpha-D-ribose 1-diphosphate: step 9/9. Catalyzes the sequential NAD-dependent oxidations of L-histidinol to L-histidinaldehyde and then to L-histidine. The sequence is that of Histidinol dehydrogenase from Methanosarcina barkeri (strain Fusaro / DSM 804).